Here is a 434-residue protein sequence, read N- to C-terminus: Glutamate-1-semialdehyde 2,1-aminomutase (434 aa).

Lys271 bears the N6-(pyridoxal phosphate)lysine mark.

It belongs to the class-III pyridoxal-phosphate-dependent aminotransferase family. HemL subfamily. As to quaternary structure, homodimer. Pyridoxal 5'-phosphate serves as cofactor.

It is found in the cytoplasm. It carries out the reaction (S)-4-amino-5-oxopentanoate = 5-aminolevulinate. The protein operates within porphyrin-containing compound metabolism; protoporphyrin-IX biosynthesis; 5-aminolevulinate from L-glutamyl-tRNA(Glu): step 2/2. Its pathway is porphyrin-containing compound metabolism; chlorophyll biosynthesis. This Prochlorococcus marinus (strain MIT 9312) protein is Glutamate-1-semialdehyde 2,1-aminomutase.